We begin with the raw amino-acid sequence, 334 residues long: D-fructose 1,6-bisphosphatase class 2/sedoheptulose 1,7-bisphosphatase (334 aa).

Mn(2+) contacts are provided by Asp-33, Glu-57, Asp-85, and Glu-88. Substrate-binding positions include 88 to 90 (EGT), Tyr-119, 164 to 166 (RAR), and 186 to 188 (DGD). Glu-213 lines the Mn(2+) pocket.

It belongs to the FBPase class 2 family. As to quaternary structure, homotetramer. Mn(2+) is required as a cofactor.

The enzyme catalyses beta-D-fructose 1,6-bisphosphate + H2O = beta-D-fructose 6-phosphate + phosphate. It carries out the reaction D-sedoheptulose 1,7-bisphosphate + H2O = D-sedoheptulose 7-phosphate + phosphate. Its pathway is carbohydrate biosynthesis; Calvin cycle. Catalyzes the hydrolysis of fructose 1,6-bisphosphate (Fru 1,6-P2) and sedoheptulose 1,7-bisphosphate (Sed 1,7-P2) to fructose 6-phosphate and sedoheptulose 7-phosphate, respectively. In Synechococcus sp. (strain CC9902), this protein is D-fructose 1,6-bisphosphatase class 2/sedoheptulose 1,7-bisphosphatase.